We begin with the raw amino-acid sequence, 162 residues long: uncharacterized protein (162 aa).

It belongs to the A.longa ORF167/ORF288 family.

The protein localises to the plastid. This is an uncharacterized protein from Euglena longa (Euglenophycean alga).